The following is a 224-amino-acid chain: Leucyl/phenylalanyl-tRNA--protein transferase (224 aa).

Belongs to the L/F-transferase family.

It is found in the cytoplasm. It carries out the reaction N-terminal L-lysyl-[protein] + L-leucyl-tRNA(Leu) = N-terminal L-leucyl-L-lysyl-[protein] + tRNA(Leu) + H(+). The catalysed reaction is N-terminal L-arginyl-[protein] + L-leucyl-tRNA(Leu) = N-terminal L-leucyl-L-arginyl-[protein] + tRNA(Leu) + H(+). It catalyses the reaction L-phenylalanyl-tRNA(Phe) + an N-terminal L-alpha-aminoacyl-[protein] = an N-terminal L-phenylalanyl-L-alpha-aminoacyl-[protein] + tRNA(Phe). In terms of biological role, functions in the N-end rule pathway of protein degradation where it conjugates Leu, Phe and, less efficiently, Met from aminoacyl-tRNAs to the N-termini of proteins containing an N-terminal arginine or lysine. This is Leucyl/phenylalanyl-tRNA--protein transferase from Rhodopseudomonas palustris (strain HaA2).